We begin with the raw amino-acid sequence, 273 residues long: Type III pantothenate kinase (273 aa).

Position 5 to 12 (5 to 12 (DVGNSHVV)) interacts with ATP. 112–115 (GTDL) provides a ligand contact to substrate. D114 (proton acceptor) is an active-site residue. D134 contributes to the K(+) binding site. Residue T137 participates in ATP binding. T189 serves as a coordination point for substrate.

The protein belongs to the type III pantothenate kinase family. Homodimer. NH4(+) is required as a cofactor. K(+) serves as cofactor.

The protein resides in the cytoplasm. It catalyses the reaction (R)-pantothenate + ATP = (R)-4'-phosphopantothenate + ADP + H(+). The protein operates within cofactor biosynthesis; coenzyme A biosynthesis; CoA from (R)-pantothenate: step 1/5. Catalyzes the phosphorylation of pantothenate (Pan), the first step in CoA biosynthesis. The protein is Type III pantothenate kinase of Treponema pallidum subsp. pallidum (strain SS14).